We begin with the raw amino-acid sequence, 361 residues long: S-adenosylmethionine decarboxylase proenzyme (361 aa).

Residues E13 and E16 contribute to the active site. S73 functions as the Schiff-base intermediate with substrate; via pyruvic acid in the catalytic mechanism. S73 is subject to Pyruvic acid (Ser); by autocatalysis. C87 functions as the Proton donor; for catalytic activity in the catalytic mechanism. Active-site proton acceptor; for processing activity residues include S236 and H249.

Belongs to the eukaryotic AdoMetDC family. Pyruvate serves as cofactor. Post-translationally, is synthesized initially as an inactive proenzyme. Formation of the active enzyme involves a self-maturation process in which the active site pyruvoyl group is generated from an internal serine residue via an autocatalytic post-translational modification. Two non-identical subunits are generated from the proenzyme in this reaction, and the pyruvate is formed at the N-terminus of the alpha chain, which is derived from the carboxyl end of the proenzyme. The post-translation cleavage follows an unusual pathway, termed non-hydrolytic serinolysis, in which the side chain hydroxyl group of the serine supplies its oxygen atom to form the C-terminus of the beta chain, while the remainder of the serine residue undergoes an oxidative deamination to produce ammonia and the pyruvoyl group blocking the N-terminus of the alpha chain.

The catalysed reaction is S-adenosyl-L-methionine + H(+) = S-adenosyl 3-(methylsulfanyl)propylamine + CO2. It participates in amine and polyamine biosynthesis; S-adenosylmethioninamine biosynthesis; S-adenosylmethioninamine from S-adenosyl-L-methionine: step 1/1. In Nicotiana sylvestris (Wood tobacco), this protein is S-adenosylmethionine decarboxylase proenzyme (SAMDC1).